Consider the following 401-residue polypeptide: Bifunctional sugar-1-phosphate nucleotidylyltransferase/acetyltransferase (401 aa).

Residues 1 to 220 (MKAFILAAGS…KPWNIIDVNK (220 aa)) are nucleotidylyltransferase. Residues 8-13 (AGSGER), glutamine 73, and glycine 79 each bind a ribonucleoside 5'-triphosphate. N-acetyl-alpha-D-glucosamine 1-phosphate-binding residues include threonine 80, tyrosine 97, glycine 131, glutamate 146, and asparagine 157. The segment at 236–401 (EDNVKIKGKV…DVGYGEFFKV (166 aa)) is acetyltransferase.

It in the N-terminal section; belongs to the N-acetylglucosamine-1-phosphate uridyltransferase family. The protein in the C-terminal section; belongs to the transferase hexapeptide repeat family. As to quaternary structure, homotrimer. Requires Co(2+) as cofactor. Mn(2+) serves as cofactor.

It catalyses the reaction dTTP + alpha-D-glucose 1-phosphate + H(+) = dTDP-alpha-D-glucose + diphosphate. The catalysed reaction is alpha-D-glucose 1-phosphate + UTP + H(+) = UDP-alpha-D-glucose + diphosphate. It carries out the reaction N-acetyl-alpha-D-galactosamine 1-phosphate + UTP + H(+) = UDP-N-acetyl-alpha-D-galactosamine + diphosphate. The enzyme catalyses N-acetyl-alpha-D-glucosamine 1-phosphate + UTP + H(+) = UDP-N-acetyl-alpha-D-glucosamine + diphosphate. It catalyses the reaction alpha-D-galactosamine 1-phosphate + acetyl-CoA = N-acetyl-alpha-D-galactosamine 1-phosphate + CoA + H(+). The catalysed reaction is alpha-D-glucosamine 1-phosphate + acetyl-CoA = N-acetyl-alpha-D-glucosamine 1-phosphate + CoA + H(+). It functions in the pathway nucleotide-sugar biosynthesis; UDP-N-acetyl-alpha-D-glucosamine biosynthesis; N-acetyl-alpha-D-glucosamine 1-phosphate from alpha-D-glucosamine 6-phosphate (route II): step 2/2. The protein operates within nucleotide-sugar biosynthesis; UDP-N-acetyl-alpha-D-glucosamine biosynthesis; UDP-N-acetyl-alpha-D-glucosamine from N-acetyl-alpha-D-glucosamine 1-phosphate: step 1/1. With respect to regulation, glcN-1-P acetyltransferase activity is inhibited by divalent cations. GalN-1-P acetyltransferase activity is enhanced by Co(2+), Mg(2+) and Ca(2+), but inhibited by Zn(2+) or Mn(2+). Its function is as follows. Bifunctional enzyme involved in the synthesis of UDP-N-acetylglucosamine (UDP-GlcNAc) and UDP-N-acetylgalactosamine (UDP-GalNAc). It has multiple amino-sugar-1-phosphate acetyltransferase activities, including glucosamine-1-phosphate (GlcN-1-P) acetyltransferase and galactosamine-1-phosphate (GalN-1-P) acetyltransferase activities, and multiple sugar-1-phosphate nucleotidylyltransferase activities, including N-acetylglucosamine-1-phosphate (GlcNAc-1-P) uridyltransferase and N-acetylgalactosamine-1-phosphate (GalNAc-1-P) uridyltransferase activities. Also catalyzes the formation of dTDP-glucose from dTTP and glucose-1-phosphate (Glc-1-P), and the reverse reaction, which produces dTTP from dTDP-glucose and diphosphate. Can also catalyze the formation of UDP-glucose from UTP and glucose-1-phosphate. This Sulfurisphaera tokodaii (strain DSM 16993 / JCM 10545 / NBRC 100140 / 7) (Sulfolobus tokodaii) protein is Bifunctional sugar-1-phosphate nucleotidylyltransferase/acetyltransferase.